Consider the following 359-residue polypeptide: Glutamine synthetase (359 aa).

In terms of domain architecture, GS beta-grasp spans 28–107 (VMAEYIWIDG…VLAACYTADG (80 aa)). The GS catalytic domain maps to 114-359 (HRDACAKLLE…GIITETMFEH (246 aa)). Ser273 is subject to Phosphoserine. Residue Thr303 is modified to Phosphothreonine. A Phosphoserine modification is found at Ser305.

This sequence belongs to the glutamine synthetase family. As to quaternary structure, homooctamer.

It is found in the cytoplasm. It carries out the reaction L-glutamate + NH4(+) + ATP = L-glutamine + ADP + phosphate + H(+). The sequence is that of Glutamine synthetase (gln1) from Schizosaccharomyces pombe (strain 972 / ATCC 24843) (Fission yeast).